The following is a 78-amino-acid chain: Large ribosomal subunit protein eL20 (78 aa).

This sequence belongs to the eukaryotic ribosomal protein eL20 family. In terms of assembly, part of the 50S ribosomal subunit. Binds 23S rRNA.

The protein is Large ribosomal subunit protein eL20 of Pyrobaculum aerophilum (strain ATCC 51768 / DSM 7523 / JCM 9630 / CIP 104966 / NBRC 100827 / IM2).